The following is a 477-amino-acid chain: Sulfate adenylyltransferase subunit 1 (477 aa).

In terms of domain architecture, tr-type G spans 22 to 239 (KDMLRFITCG…TVQISHDAPL (218 aa)). A G1 region spans residues 31-38 (GSVDDGKS). 31–38 (GSVDDGKS) is a GTP binding site. Positions 89 to 93 (GITID) are G2. The interval 110 to 113 (DCPG) is G3. Residues 110 to 114 (DCPGH) and 165 to 168 (NKMD) contribute to the GTP site. The segment at 165–168 (NKMD) is G4. The interval 202 to 204 (SAL) is G5.

This sequence belongs to the TRAFAC class translation factor GTPase superfamily. Classic translation factor GTPase family. CysN/NodQ subfamily. Heterodimer composed of CysD, the smaller subunit, and CysN.

The catalysed reaction is sulfate + ATP + H(+) = adenosine 5'-phosphosulfate + diphosphate. The protein operates within sulfur metabolism; hydrogen sulfide biosynthesis; sulfite from sulfate: step 1/3. Its function is as follows. With CysD forms the ATP sulfurylase (ATPS) that catalyzes the adenylation of sulfate producing adenosine 5'-phosphosulfate (APS) and diphosphate, the first enzymatic step in sulfur assimilation pathway. APS synthesis involves the formation of a high-energy phosphoric-sulfuric acid anhydride bond driven by GTP hydrolysis by CysN coupled to ATP hydrolysis by CysD. The polypeptide is Sulfate adenylyltransferase subunit 1 (Chromobacterium violaceum (strain ATCC 12472 / DSM 30191 / JCM 1249 / CCUG 213 / NBRC 12614 / NCIMB 9131 / NCTC 9757 / MK)).